Consider the following 354-residue polypeptide: uncharacterized protein (354 aa).

9 consecutive transmembrane segments (helical) span residues 9-29 (MGKI…LIFS), 31-51 (ISIN…ISFT), 76-96 (NFGI…LIWV), 109-129 (FLNV…AIVV), 144-164 (IIFS…VLLI), 185-205 (GILV…ALGV), 278-298 (YGTL…GFFY), 306-326 (GIYL…IESG), and 327-347 (ILDI…IYAI).

The protein localises to the cell membrane. This is an uncharacterized protein from Methanocaldococcus jannaschii (strain ATCC 43067 / DSM 2661 / JAL-1 / JCM 10045 / NBRC 100440) (Methanococcus jannaschii).